Consider the following 154-residue polypeptide: Myoglobin (154 aa).

Positions 2 to 148 constitute a Globin domain; that stretch reads GLSEGEWQLV…FRKDIATKYK (147 aa). Serine 4 carries the phosphoserine modification. Histidine 65 serves as a coordination point for nitrite. An O2-binding site is contributed by histidine 65. Threonine 68 is subject to Phosphothreonine. Heme b is bound at residue histidine 94.

Belongs to the globin family. As to quaternary structure, monomeric.

The protein resides in the cytoplasm. It localises to the sarcoplasm. The enzyme catalyses Fe(III)-heme b-[protein] + nitric oxide + H2O = Fe(II)-heme b-[protein] + nitrite + 2 H(+). It catalyses the reaction H2O2 + AH2 = A + 2 H2O. Monomeric heme protein which primary function is to store oxygen and facilitate its diffusion within muscle tissues. Reversibly binds oxygen through a pentacoordinated heme iron and enables its timely and efficient release as needed during periods of heightened demand. Depending on the oxidative conditions of tissues and cells, and in addition to its ability to bind oxygen, it also has a nitrite reductase activity whereby it regulates the production of bioactive nitric oxide. Under stress conditions, like hypoxia and anoxia, it also protects cells against reactive oxygen species thanks to its pseudoperoxidase activity. This is Myoglobin (MB) from Phocoenoides dalli dalli (Dall's porpoise).